Reading from the N-terminus, the 694-residue chain is Polynucleotide 3'-phosphatase ZDP (694 aa).

2 consecutive PARP-type zinc fingers follow at residues 50–132 (VVAE…EQCG) and 165–247 (VIAD…EVNK). Zn(2+) contacts are provided by cysteine 62, cysteine 65, histidine 93, cysteine 96, cysteine 177, cysteine 180, histidine 208, and cysteine 211. The interval 266–331 (AIADNELTEE…SPDSSKVISE (66 aa)) is disordered. Residues 302-321 (ESKKPASDEISEQKTKDVKN) show a composition bias toward basic and acidic residues. Positions 322–331 (SPDSSKVISE) are enriched in polar residues. A PARP-type 3 zinc finger spans residues 328 to 410 (VISEYAKSSR…ALKELVQQCG (83 aa)). Residues cysteine 340, cysteine 343, histidine 371, and cysteine 374 each contribute to the Zn(2+) site.

This sequence in the C-terminal section; belongs to the DNA 3' phosphatase family. Interacts with ROS1 (via the central region). Binds to XRCC1.

The protein localises to the nucleus. It is found in the nucleoplasm. The enzyme catalyses a 3'end (2'-deoxyribonucleotide 3'-phosphate)-DNA + H2O = a 3'-end 2'-deoxyribonucleotide-DNA + phosphate. With respect to regulation, activated by the presence of DNA. Stimulated by XRCC1. Nick-sensing 3'-phosphoesterase involved in a base excision repair pathway required for active DNA demethylation. The N-terminal DNA-binding domain binds specifically to gap sites and sharply bends the target DNA. Lacks 5'-kinase activity but is capable of 3'-phosphoglycolate end processing. Inactive on 3'-alpha,beta-unsaturated aldehyde (3'-dRP). Protects partially genes from transcriptional silencing by preventing promoter DNA hypermethylation. The sequence is that of Polynucleotide 3'-phosphatase ZDP (ZDP) from Arabidopsis thaliana (Mouse-ear cress).